We begin with the raw amino-acid sequence, 274 residues long: Large ribosomal subunit protein uL2cy (274 aa).

Disordered regions lie at residues 1–20 (MAIH…AVDS) and 224–274 (NPVD…RRSK).

It belongs to the universal ribosomal protein uL2 family. Part of the 50S ribosomal subunit.

The protein resides in the plastid. It is found in the chloroplast. This Populus alba (White poplar) protein is Large ribosomal subunit protein uL2cy (rpl2-B).